A 92-amino-acid polypeptide reads, in one-letter code: Large ribosomal subunit protein uL23c (92 aa).

Belongs to the universal ribosomal protein uL23 family. Part of the 50S ribosomal subunit.

It localises to the plastid. It is found in the chloroplast. Its function is as follows. Binds to 23S rRNA. In Chara vulgaris (Common stonewort), this protein is Large ribosomal subunit protein uL23c (rpl23).